Here is a 467-residue protein sequence, read N- to C-terminus: Uronate isomerase (467 aa).

Belongs to the metallo-dependent hydrolases superfamily. Uronate isomerase family.

The catalysed reaction is D-glucuronate = D-fructuronate. The enzyme catalyses aldehydo-D-galacturonate = keto-D-tagaturonate. The protein operates within carbohydrate metabolism; pentose and glucuronate interconversion. The protein is Uronate isomerase of Clostridium acetobutylicum (strain ATCC 824 / DSM 792 / JCM 1419 / IAM 19013 / LMG 5710 / NBRC 13948 / NRRL B-527 / VKM B-1787 / 2291 / W).